Consider the following 430-residue polypeptide: KIN17-like protein (430 aa).

A C2H2-type zinc finger spans residues 28–50 (CQMCQKQCRDENGFKCHCMSESH). Positions 51–160 (QRQMQVFGQA…KARLKRKRIK (110 aa)) are winged helix-turn-helix (wHTH). A coiled-coil region spans residues 147-183 (EQAVKARLKRKRIKSDLAEDERQERMIARQIERAQQS). Residues 155 to 158 (KRKR) carry the Nuclear localization signal (NLS) motif. Disordered stretches follow at residues 179–230 (RAQQ…ANKA) and 261–284 (EEEDEVSARDKEKEELAKKKGKDA). Acidic residues predominate over residues 191 to 224 (LGDDASPDGSEGESGSEDEYSDSENDHEGQEEDA). Residues 261-278 (EEEDEVSARDKEKEELAK) are compositionally biased toward basic and acidic residues. Residues 283-312 (DAINAAEARRSALDELMKEEEKAKERSNRK) adopt a coiled-coil conformation. The tract at residues 319-370 (GIVVKVMSKSLAEKGYCKQKGVVKRVIDKYVGEIEMLESKHVLRVDQDELET) is C-terminal subdomain A. The C-terminal subdomain B stretch occupies residues 376–427 (GGLVRIVNGAYRGSNARLLSVDTERFCAKVQVEKGLYDGKVLKAIEYEDICK).

It belongs to the KIN17 family.

The protein resides in the nucleus. The polypeptide is KIN17-like protein (Oryza sativa subsp. japonica (Rice)).